The chain runs to 292 residues: uncharacterized protein (292 aa).

In terms of domain architecture, HTH lysR-type spans 1–58 (MEWEQLEYFQTLARMQHVTKAAKSLSITQPALSRSIARLENHLGVPLFDRQGRSISLN). Residues 18 to 37 (VTKAAKSLSITQPALSRSIA) constitute a DNA-binding region (H-T-H motif).

This sequence belongs to the LysR transcriptional regulatory family.

This is an uncharacterized protein from Bacillus subtilis (strain 168).